The chain runs to 68 residues: DNA-directed RNA polymerase subunit omega (68 aa).

Belongs to the RNA polymerase subunit omega family. In terms of assembly, the RNAP catalytic core consists of 2 alpha, 1 beta, 1 beta' and 1 omega subunit. When a sigma factor is associated with the core the holoenzyme is formed, which can initiate transcription.

The catalysed reaction is RNA(n) + a ribonucleoside 5'-triphosphate = RNA(n+1) + diphosphate. Promotes RNA polymerase assembly. Latches the N- and C-terminal regions of the beta' subunit thereby facilitating its interaction with the beta and alpha subunits. The sequence is that of DNA-directed RNA polymerase subunit omega from Ruminiclostridium cellulolyticum (strain ATCC 35319 / DSM 5812 / JCM 6584 / H10) (Clostridium cellulolyticum).